We begin with the raw amino-acid sequence, 300 residues long: Tumor necrosis factor receptor superfamily member 6B (300 aa).

Positions 1-29 (MRALEGPGLSLLCLVLALPALLPVPAVRG) are cleaved as a signal peptide. TNFR-Cys repeat units follow at residues 31-70 (AETP…PTTC), 72-113 (PCPP…NRAC), 115-150 (CRTG…NTQC), and 152-193 (PCPP…DTLC). Cystine bridges form between cysteine 49-cysteine 62, cysteine 52-cysteine 70, cysteine 73-cysteine 88, cysteine 91-cysteine 105, cysteine 95-cysteine 113, cysteine 115-cysteine 126, cysteine 132-cysteine 150, and cysteine 153-cysteine 168. An N-linked (GlcNAc...) asparagine glycan is attached at asparagine 173. Cysteine 174 and cysteine 193 are joined by a disulfide.

As to expression, detected in fetal lung, brain and liver. Detected in adult stomach, spinal cord, lymph node, trachea, spleen, colon and lung. Highly expressed in several primary tumors from colon, stomach, rectum, esophagus and in SW480 colon carcinoma cells.

The protein resides in the secreted. Functionally, decoy receptor that can neutralize the cytotoxic ligands TNFS14/LIGHT, TNFSF15 and TNFSF6/FASL. Protects against apoptosis. In Homo sapiens (Human), this protein is Tumor necrosis factor receptor superfamily member 6B (TNFRSF6B).